Here is a 392-residue protein sequence, read N- to C-terminus: Formate-dependent phosphoribosylglycinamide formyltransferase (392 aa).

N(1)-(5-phospho-beta-D-ribosyl)glycinamide is bound by residues 22–23 (EL) and E82. Residues R114, K155, 160 to 165 (SSGKGQ), 195 to 198 (EGLV), and E203 each bind ATP. Residues 119–308 (RLAAETLSLP…EFALHVRAFL (190 aa)) form the ATP-grasp domain. Residues E267 and E279 each coordinate Mg(2+). Residues D286, K355, and 362–363 (RR) each bind N(1)-(5-phospho-beta-D-ribosyl)glycinamide.

It belongs to the PurK/PurT family. Homodimer.

The enzyme catalyses N(1)-(5-phospho-beta-D-ribosyl)glycinamide + formate + ATP = N(2)-formyl-N(1)-(5-phospho-beta-D-ribosyl)glycinamide + ADP + phosphate + H(+). The protein operates within purine metabolism; IMP biosynthesis via de novo pathway; N(2)-formyl-N(1)-(5-phospho-D-ribosyl)glycinamide from N(1)-(5-phospho-D-ribosyl)glycinamide (formate route): step 1/1. In terms of biological role, involved in the de novo purine biosynthesis. Catalyzes the transfer of formate to 5-phospho-ribosyl-glycinamide (GAR), producing 5-phospho-ribosyl-N-formylglycinamide (FGAR). Formate is provided by PurU via hydrolysis of 10-formyl-tetrahydrofolate. The protein is Formate-dependent phosphoribosylglycinamide formyltransferase of Sodalis glossinidius (strain morsitans).